Consider the following 212-residue polypeptide: Thymidylate kinase (212 aa).

11–18 (GLEGAGKS) is a binding site for ATP.

It belongs to the thymidylate kinase family.

It catalyses the reaction dTMP + ATP = dTDP + ADP. Its function is as follows. Phosphorylation of dTMP to form dTDP in both de novo and salvage pathways of dTTP synthesis. This is Thymidylate kinase from Vibrio vulnificus (strain CMCP6).